Reading from the N-terminus, the 481-residue chain is Xylulose kinase (481 aa).

81-82 (QH) contributes to the substrate binding site. D239 acts as the Proton acceptor in catalysis.

Belongs to the FGGY kinase family.

It catalyses the reaction D-xylulose + ATP = D-xylulose 5-phosphate + ADP + H(+). Functionally, catalyzes the phosphorylation of D-xylulose to D-xylulose 5-phosphate. The protein is Xylulose kinase of Streptomyces coelicolor (strain ATCC BAA-471 / A3(2) / M145).